The following is a 144-amino-acid chain: uncharacterized protein (144 aa).

The disordered stretch occupies residues Lys-90–Met-144. Over residues Lys-98–Lys-130 the composition is skewed to basic residues.

This is an uncharacterized protein from Sputnik virophage.